Consider the following 621-residue polypeptide: Chaperone protein HtpG (621 aa).

Residues 1 to 328 are a; substrate-binding; that stretch reads MTQEKKKFDA…SEDLPLNISR (328 aa). Positions 329 to 544 are b; that stretch reads ESLQHNSVLE…DSAMDIRMER (216 aa). The disordered stretch occupies residues 475–495; sequence SDIDVEQTTSQSEDKNTHSKK. A compositionally biased stretch (basic and acidic residues) spans 486 to 495; it reads SEDKNTHSKK. A c region spans residues 545-621; sequence FLIEQKQITA…LNDIVQKAIL (77 aa).

Belongs to the heat shock protein 90 family. As to quaternary structure, homodimer.

The protein localises to the cytoplasm. Molecular chaperone. Has ATPase activity. The sequence is that of Chaperone protein HtpG from Rickettsia akari (strain Hartford).